A 179-amino-acid chain; its full sequence is ATP synthase subunit b (179 aa).

A helical transmembrane segment spans residues 27–47; the sequence is TAITFLVMLAVLAKFAWGPIV.

The protein belongs to the ATPase B chain family. As to quaternary structure, F-type ATPases have 2 components, F(1) - the catalytic core - and F(0) - the membrane proton channel. F(1) has five subunits: alpha(3), beta(3), gamma(1), delta(1), epsilon(1). F(0) has three main subunits: a(1), b(2) and c(10-14). The alpha and beta chains form an alternating ring which encloses part of the gamma chain. F(1) is attached to F(0) by a central stalk formed by the gamma and epsilon chains, while a peripheral stalk is formed by the delta and b chains.

The protein localises to the cell inner membrane. Functionally, f(1)F(0) ATP synthase produces ATP from ADP in the presence of a proton or sodium gradient. F-type ATPases consist of two structural domains, F(1) containing the extramembraneous catalytic core and F(0) containing the membrane proton channel, linked together by a central stalk and a peripheral stalk. During catalysis, ATP synthesis in the catalytic domain of F(1) is coupled via a rotary mechanism of the central stalk subunits to proton translocation. In terms of biological role, component of the F(0) channel, it forms part of the peripheral stalk, linking F(1) to F(0). In Anaeromyxobacter dehalogenans (strain 2CP-C), this protein is ATP synthase subunit b.